The chain runs to 285 residues: Acetylglutamate kinase (285 aa).

Residues 69 to 70 (GG), Arg91, and Asn183 contribute to the substrate site.

This sequence belongs to the acetylglutamate kinase family. ArgB subfamily.

The protein resides in the cytoplasm. It catalyses the reaction N-acetyl-L-glutamate + ATP = N-acetyl-L-glutamyl 5-phosphate + ADP. It participates in amino-acid biosynthesis; L-arginine biosynthesis; N(2)-acetyl-L-ornithine from L-glutamate: step 2/4. Functionally, catalyzes the ATP-dependent phosphorylation of N-acetyl-L-glutamate. The chain is Acetylglutamate kinase from Jannaschia sp. (strain CCS1).